A 438-amino-acid chain; its full sequence is DEAD-box ATP-dependent RNA helicase CshB (438 aa).

The short motif at 4–32 (TKFELYELKPFIIDAVHRLGFYEPTDIQK) is the Q motif element. The Helicase ATP-binding domain occupies 35–208 (IPAVLKKESV…KKYMENPKYA (174 aa)). An ATP-binding site is contributed by 48 to 55 (SQTGTGKT). Residues 156–159 (DEAD) carry the DEAD box motif. One can recognise a Helicase C-terminal domain in the interval 235 to 385 (LLFDIMSHLN…EWKKGDDRQR (151 aa)). The tract at residues 380–438 (GDDRQRRKKRKKTPNEADEIAHRLVKKPKKVKPGYKKKMSYEMEKIKKKQRRNQSKKRK) is disordered. The span at 392-401 (TPNEADEIAH) shows a compositional bias: basic and acidic residues. 2 stretches are compositionally biased toward basic residues: residues 402–417 (RLVK…YKKK) and 425–438 (IKKK…KKRK).

This sequence belongs to the DEAD box helicase family. As to quaternary structure, interacts with CspB when cells are transcriptionally active. May interact with RNA helicases CshA and DbpA (DeaD), may be a component of a possible RNA degradosome complex composed of rny, rnja, rnjb, pnp, pfkA and eno (although rnjA and rnjB's presence is unclear). Specifically interacts with pnp and rny.

It is found in the cytoplasm. It localises to the nucleoid. It carries out the reaction ATP + H2O = ADP + phosphate + H(+). In terms of biological role, DEAD-box RNA helicase that plays a role in 70S ribosome assembly. May work in conjunction with the cold shock proteins to ensure proper initiation of transcription at low and optimal temperatures. This is DEAD-box ATP-dependent RNA helicase CshB from Bacillus subtilis (strain 168).